The sequence spans 34 residues: Turripeptide Pal9a (34 aa).

Cystine bridges form between Cys-3-Cys-17, Cys-8-Cys-19, and Cys-13-Cys-30. The residue at position 34 (Gln-34) is a Glutamine amide.

Expressed by the venom duct.

The protein resides in the secreted. This is Turripeptide Pal9a from Polystira albida (White giant-turris).